Consider the following 320-residue polypeptide: Cytochrome f (320 aa).

The first 35 residues, Met1–Ala35, serve as a signal peptide directing secretion. Heme contacts are provided by Tyr36, Cys56, Cys59, and His60. The chain crosses the membrane as a helical span at residues Val286 to Lys306.

It belongs to the cytochrome f family. The 4 large subunits of the cytochrome b6-f complex are cytochrome b6, subunit IV (17 kDa polypeptide, petD), cytochrome f and the Rieske protein, while the 4 small subunits are PetG, PetL, PetM and PetN. The complex functions as a dimer. Heme is required as a cofactor.

The protein resides in the plastid. The protein localises to the chloroplast thylakoid membrane. Component of the cytochrome b6-f complex, which mediates electron transfer between photosystem II (PSII) and photosystem I (PSI), cyclic electron flow around PSI, and state transitions. The polypeptide is Cytochrome f (Draba nemorosa (Woodland whitlowgrass)).